The sequence spans 366 residues: Chorismate synthase (366 aa).

NADP(+) contacts are provided by R48 and R54. Residues 131–133, 243–244, G288, 303–307, and R329 each bind FMN; these read RAS, NA, and KPTPS.

Belongs to the chorismate synthase family. As to quaternary structure, homotetramer. It depends on FMNH2 as a cofactor.

It catalyses the reaction 5-O-(1-carboxyvinyl)-3-phosphoshikimate = chorismate + phosphate. It participates in metabolic intermediate biosynthesis; chorismate biosynthesis; chorismate from D-erythrose 4-phosphate and phosphoenolpyruvate: step 7/7. In terms of biological role, catalyzes the anti-1,4-elimination of the C-3 phosphate and the C-6 proR hydrogen from 5-enolpyruvylshikimate-3-phosphate (EPSP) to yield chorismate, which is the branch point compound that serves as the starting substrate for the three terminal pathways of aromatic amino acid biosynthesis. This reaction introduces a second double bond into the aromatic ring system. The chain is Chorismate synthase from Bartonella quintana (strain Toulouse) (Rochalimaea quintana).